Here is a 969-residue protein sequence, read N- to C-terminus: Liprin-beta-1 (969 aa).

Serine 37 bears the Phosphoserine mark. At threonine 39 the chain carries Phosphothreonine. Serine 40 bears the Phosphoserine mark. Residues 99–310 adopt a coiled-coil conformation; sequence GDVYQERLAR…CLSRYRKMQD (212 aa). Lysine 291 carries the post-translational modification N6-acetyllysine. Disordered regions lie at residues 342–361, 381–407, and 424–482; these read DLER…RDLL, LLPP…FEEG, and GVST…RKAR. The segment covering 346–358 has biased composition (low complexity); sequence STSSTPGMGSPSR. Phosphoserine occurs at positions 403 and 435. Low complexity predominate over residues 426–438; sequence STSSLQKSSSLGN. Positions 439–452 are enriched in basic and acidic residues; that stretch reads LKKEASDGTDKAPT. Lysine 440 participates in a covalent cross-link: Glycyl lysine isopeptide (Lys-Gly) (interchain with G-Cter in SUMO2). Serine 500 carries the post-translational modification Phosphoserine. Residues 518 to 529 show a composition bias toward polar residues; that stretch reads AGTSRSKGSQGT. Positions 518 to 593 are disordered; it reads AGTSRSKGSQ…PRLGWSRDLG (76 aa). Serine 538 bears the Phosphoserine mark. The segment covering 543–557 has biased composition (basic residues); sequence KKSRGIMRLFGKLRR. A phosphoserine mark is found at serine 560 and serine 595. SAM domains are found at residues 606–670 and 678–741; these read WTKE…LGSE and LDFN…LRIN. 2 positions are modified to phosphoserine: serine 753 and serine 757. The 73-residue stretch at 763 to 835 folds into the SAM 3 domain; that stretch reads VQQWTNHRVM…ATHFNLLIGA (73 aa). 3 positions are modified to phosphoserine: serine 957, serine 959, and serine 961. Threonine 963 bears the Phosphothreonine mark.

The protein belongs to the liprin family. Liprin-beta subfamily. In terms of assembly, forms homodimers and heterodimers. Interacts with S100A4 in a Ca(2+)-dependent mode. Part of a cortical microtubule stabilization complex (CMSC) composed of KANK1, PPFIA1, PPFIBP1, ERC1/ELKS, PHLDB2/LL5beta, CLASPs, KIF21A and possibly additional interactors; within CMSCs KANK1 and PHLDB2/LL5beta seem to be the core components for recruiting microtubule-binding proteins KIF21A and CLASPs, whereas PPFIA1, PPFIBP1 and ERC1/ELKS serve as scaffolds for protein clustering. Interacts with KANK1 (via CC1 domain, residues 244-339).

Its subcellular location is the cytoplasm. The protein resides in the cell cortex. In terms of biological role, may regulate the disassembly of focal adhesions. Did not bind receptor-like tyrosine phosphatases type 2A. The polypeptide is Liprin-beta-1 (Ppfibp1) (Mus musculus (Mouse)).